We begin with the raw amino-acid sequence, 84 residues long: DNA-directed RNA polymerase subunit Rpo5 (84 aa).

This sequence belongs to the archaeal Rpo5/eukaryotic RPB5 RNA polymerase subunit family. As to quaternary structure, part of the RNA polymerase complex.

Its subcellular location is the cytoplasm. It catalyses the reaction RNA(n) + a ribonucleoside 5'-triphosphate = RNA(n+1) + diphosphate. Functionally, DNA-dependent RNA polymerase (RNAP) catalyzes the transcription of DNA into RNA using the four ribonucleoside triphosphates as substrates. The protein is DNA-directed RNA polymerase subunit Rpo5 of Saccharolobus islandicus (strain Y.N.15.51 / Yellowstone #2) (Sulfolobus islandicus).